Reading from the N-terminus, the 819-residue chain is DNA topoisomerase 4 subunit A (819 aa).

The Topo IIA-type catalytic domain occupies 30 to 496 (LPDIRDGLKP…QIIEIDTASL (467 aa)). The active-site O-(5'-phospho-DNA)-tyrosine intermediate is Tyr-118.

The protein belongs to the type II topoisomerase GyrA/ParC subunit family. ParC type 2 subfamily. Heterotetramer composed of ParC and ParE.

Its subcellular location is the cell membrane. The enzyme catalyses ATP-dependent breakage, passage and rejoining of double-stranded DNA.. Its function is as follows. Topoisomerase IV is essential for chromosome segregation. It relaxes supercoiled DNA. Performs the decatenation events required during the replication of a circular DNA molecule. This is DNA topoisomerase 4 subunit A from Streptococcus pyogenes serotype M3 (strain ATCC BAA-595 / MGAS315).